We begin with the raw amino-acid sequence, 933 residues long: Protein FAM83G (933 aa).

4 disordered regions span residues 339 to 375 (KSASDTGAEKEKNSSNCNNMATKPKPKPTEQPPQEQK), 450 to 716 (TECQ…SSSV), 870 to 899 (WGPSHAANQPSPLTSNPMPAEHPSTPFGIP), and 911 to 933 (TKMGASNLDSRRRGHGYLGHKDQ). Positions 452–466 (CQKGSETSQEQTSSK) are enriched in polar residues. Composition is skewed to basic and acidic residues over residues 467–480 (VETHEPYSEKEKSG) and 503–514 (SKVDQGRMEHSP). Polar residues-rich tracts occupy residues 515–531 (SKATSLTQVSQQNQSMD) and 538–580 (SPSQ…SSVA). A compositionally biased stretch (basic and acidic residues) spans 590-609 (KEPVKDTVDELEDTSIKDPP). The segment covering 651 to 660 (KNAQNANIGS) has biased composition (polar residues). Residues 702-716 (SSGSGSLPPSSSSSV) show a composition bias toward low complexity. Over residues 875–886 (AANQPSPLTSNP) the composition is skewed to polar residues.

It belongs to the FAM83 family. Interacts with SMAD1 (via MH2 domain); in a SMAD4-independent manner.

The protein resides in the cytoplasm. It is found in the cytosol. It localises to the nucleus. Its function is as follows. Substrate for type I BMP receptor kinase involved in regulation of some target genes of the BMP signaling pathway. May also play a role in other signaling pathways. In Xenopus laevis (African clawed frog), this protein is Protein FAM83G (fam83g).